Reading from the N-terminus, the 792-residue chain is Protocadherin beta-18 (792 aa).

The N-terminal stretch at 1–26 (MAARGSCVSRQRQVLFLFLLGGLCLA) is a signal peptide. Cadherin domains are found at residues 27–133 (GSEL…SPIF), 134–242 (QDKK…APQF), 243–347 (PQEL…APEL), 348–451 (IMSS…APAF), 452–561 (NQTS…APFV), and 568–676 (ASAP…LPEV). N-linked (GlcNAc...) asparagine glycosylation is present at Asn-169. Asn-418 and Asn-452 each carry an N-linked (GlcNAc...) asparagine glycan. Residues 693 to 713 (VIALASVSSLFLLSVLLFVGV) form a helical membrane-spanning segment.

It is found in the cell membrane. Its function is as follows. Potential calcium-dependent cell-adhesion protein. This is Protocadherin beta-18 (Pcdhb18) from Mus musculus (Mouse).